Consider the following 173-residue polypeptide: Large ribosomal subunit protein uL10 (173 aa).

It belongs to the universal ribosomal protein uL10 family. In terms of assembly, part of the ribosomal stalk of the 50S ribosomal subunit. The N-terminus interacts with L11 and the large rRNA to form the base of the stalk. The C-terminus forms an elongated spine to which L12 dimers bind in a sequential fashion forming a multimeric L10(L12)X complex.

In terms of biological role, forms part of the ribosomal stalk, playing a central role in the interaction of the ribosome with GTP-bound translation factors. This chain is Large ribosomal subunit protein uL10, found in Maridesulfovibrio salexigens (strain ATCC 14822 / DSM 2638 / NCIMB 8403 / VKM B-1763) (Desulfovibrio salexigens).